The sequence spans 156 residues: Aspartate carbamoyltransferase regulatory chain (156 aa).

Residues Cys109, Cys114, Cys140, and Cys143 each contribute to the Zn(2+) site.

This sequence belongs to the PyrI family. In terms of assembly, contains catalytic and regulatory chains. Requires Zn(2+) as cofactor.

Involved in allosteric regulation of aspartate carbamoyltransferase. The protein is Aspartate carbamoyltransferase regulatory chain of Methanosarcina barkeri (strain Fusaro / DSM 804).